A 540-amino-acid polypeptide reads, in one-letter code: Chaperonin GroEL (540 aa).

ATP is bound by residues 29–32 (TLGP), 86–90 (DGTTT), Gly413, 476–478 (NAA), and Asp492.

It belongs to the chaperonin (HSP60) family. In terms of assembly, forms a cylinder of 14 subunits composed of two heptameric rings stacked back-to-back. Interacts with the co-chaperonin GroES.

Its subcellular location is the cytoplasm. The catalysed reaction is ATP + H2O + a folded polypeptide = ADP + phosphate + an unfolded polypeptide.. In terms of biological role, together with its co-chaperonin GroES, plays an essential role in assisting protein folding. The GroEL-GroES system forms a nano-cage that allows encapsulation of the non-native substrate proteins and provides a physical environment optimized to promote and accelerate protein folding. The polypeptide is Chaperonin GroEL (Streptococcus pneumoniae (strain ATCC 700669 / Spain 23F-1)).